The following is a 180-amino-acid chain: Crossover junction endodeoxyribonuclease RuvC (180 aa).

Active-site residues include aspartate 9, glutamate 74, and aspartate 146. Mg(2+) is bound by residues aspartate 9, glutamate 74, and aspartate 146.

The protein belongs to the RuvC family. Homodimer which binds Holliday junction (HJ) DNA. The HJ becomes 2-fold symmetrical on binding to RuvC with unstacked arms; it has a different conformation from HJ DNA in complex with RuvA. In the full resolvosome a probable DNA-RuvA(4)-RuvB(12)-RuvC(2) complex forms which resolves the HJ. Requires Mg(2+) as cofactor.

The protein resides in the cytoplasm. The enzyme catalyses Endonucleolytic cleavage at a junction such as a reciprocal single-stranded crossover between two homologous DNA duplexes (Holliday junction).. The RuvA-RuvB-RuvC complex processes Holliday junction (HJ) DNA during genetic recombination and DNA repair. Endonuclease that resolves HJ intermediates. Cleaves cruciform DNA by making single-stranded nicks across the HJ at symmetrical positions within the homologous arms, yielding a 5'-phosphate and a 3'-hydroxyl group; requires a central core of homology in the junction. The consensus cleavage sequence is 5'-(A/T)TT(C/G)-3'. Cleavage occurs on the 3'-side of the TT dinucleotide at the point of strand exchange. HJ branch migration catalyzed by RuvA-RuvB allows RuvC to scan DNA until it finds its consensus sequence, where it cleaves and resolves the cruciform DNA. This is Crossover junction endodeoxyribonuclease RuvC from Methylobacillus flagellatus (strain ATCC 51484 / DSM 6875 / VKM B-1610 / KT).